A 332-amino-acid chain; its full sequence is Glycerol-3-phosphate dehydrogenase [NAD(P)+] (332 aa).

Ser15, Trp16, and Lys110 together coordinate NADPH. Sn-glycerol 3-phosphate is bound by residues Lys110, Gly137, and Ser139. Ala141 contacts NADPH. Sn-glycerol 3-phosphate-binding residues include Lys192, Asp245, Ser255, Arg256, and Asn257. Lys192 (proton acceptor) is an active-site residue. NADPH is bound at residue Arg256. Glu282 is a binding site for NADPH.

It belongs to the NAD-dependent glycerol-3-phosphate dehydrogenase family.

The protein resides in the cytoplasm. It catalyses the reaction sn-glycerol 3-phosphate + NAD(+) = dihydroxyacetone phosphate + NADH + H(+). It carries out the reaction sn-glycerol 3-phosphate + NADP(+) = dihydroxyacetone phosphate + NADPH + H(+). Its pathway is membrane lipid metabolism; glycerophospholipid metabolism. In terms of biological role, catalyzes the reduction of the glycolytic intermediate dihydroxyacetone phosphate (DHAP) to sn-glycerol 3-phosphate (G3P), the key precursor for phospholipid synthesis. This chain is Glycerol-3-phosphate dehydrogenase [NAD(P)+], found in Coxiella burnetii (strain RSA 331 / Henzerling II).